Consider the following 249-residue polypeptide: Ubiquinone biosynthesis O-methyltransferase (249 aa).

The tract at residues 1–23 (MTSPSQVLPASAGKPTGPNADPK) is disordered. Residues arginine 52, glycine 71, aspartate 92, and methionine 136 each contribute to the S-adenosyl-L-methionine site.

Belongs to the methyltransferase superfamily. UbiG/COQ3 family.

The catalysed reaction is a 3-demethylubiquinol + S-adenosyl-L-methionine = a ubiquinol + S-adenosyl-L-homocysteine + H(+). It carries out the reaction a 3-(all-trans-polyprenyl)benzene-1,2-diol + S-adenosyl-L-methionine = a 2-methoxy-6-(all-trans-polyprenyl)phenol + S-adenosyl-L-homocysteine + H(+). Its pathway is cofactor biosynthesis; ubiquinone biosynthesis. O-methyltransferase that catalyzes the 2 O-methylation steps in the ubiquinone biosynthetic pathway. This chain is Ubiquinone biosynthesis O-methyltransferase, found in Cupriavidus pinatubonensis (strain JMP 134 / LMG 1197) (Cupriavidus necator (strain JMP 134)).